The following is a 357-amino-acid chain: UDP-N-acetylglucosamine--N-acetylmuramyl-(pentapeptide) pyrophosphoryl-undecaprenol N-acetylglucosamine transferase (357 aa).

UDP-N-acetyl-alpha-D-glucosamine-binding positions include 15–17 (TGG), Asn124, Arg165, Ser194, and Gln288.

Belongs to the glycosyltransferase 28 family. MurG subfamily.

It is found in the cell inner membrane. The enzyme catalyses di-trans,octa-cis-undecaprenyl diphospho-N-acetyl-alpha-D-muramoyl-L-alanyl-D-glutamyl-meso-2,6-diaminopimeloyl-D-alanyl-D-alanine + UDP-N-acetyl-alpha-D-glucosamine = di-trans,octa-cis-undecaprenyl diphospho-[N-acetyl-alpha-D-glucosaminyl-(1-&gt;4)]-N-acetyl-alpha-D-muramoyl-L-alanyl-D-glutamyl-meso-2,6-diaminopimeloyl-D-alanyl-D-alanine + UDP + H(+). It functions in the pathway cell wall biogenesis; peptidoglycan biosynthesis. Cell wall formation. Catalyzes the transfer of a GlcNAc subunit on undecaprenyl-pyrophosphoryl-MurNAc-pentapeptide (lipid intermediate I) to form undecaprenyl-pyrophosphoryl-MurNAc-(pentapeptide)GlcNAc (lipid intermediate II). The polypeptide is UDP-N-acetylglucosamine--N-acetylmuramyl-(pentapeptide) pyrophosphoryl-undecaprenol N-acetylglucosamine transferase (Nostoc punctiforme (strain ATCC 29133 / PCC 73102)).